A 165-amino-acid polypeptide reads, in one-letter code: Putative protein FAM86C2P (165 aa).

This sequence belongs to the class I-like SAM-binding methyltransferase superfamily. EEF2KMT family.

This Homo sapiens (Human) protein is Putative protein FAM86C2P (FAM86C2P).